The primary structure comprises 217 residues: Small ribosomal subunit protein uS3 (217 aa).

The KH type-2 domain occupies I40–R110.

Belongs to the universal ribosomal protein uS3 family. In terms of assembly, part of the 30S ribosomal subunit. Forms a tight complex with proteins S10 and S14.

In terms of biological role, binds the lower part of the 30S subunit head. Binds mRNA in the 70S ribosome, positioning it for translation. This Rickettsia massiliae (strain Mtu5) protein is Small ribosomal subunit protein uS3.